A 302-amino-acid chain; its full sequence is N-acetylaspartate synthetase (302 aa).

Residues 46–60 are compositionally biased toward pro residues; the sequence is PGPAAAPPAPPPAPV. A disordered region spans residues 46–72; the sequence is PGPAAAPPAPPPAPVAQPHGGAGGAGP. The helical transmembrane segment at 121-141 threads the bilayer; that stretch reads YALLAALCFAVSRSLLLTCLV. Residues 143–283 form the N-acetyltransferase domain; it reads AALLGLRYYY…VLPGMTLSLA (141 aa).

It belongs to the NAT8 family. In terms of tissue distribution, expressed in brain.

It is found in the cytoplasm. Its subcellular location is the microsome membrane. The protein localises to the mitochondrion membrane. It localises to the endoplasmic reticulum membrane. It carries out the reaction L-aspartate + acetyl-CoA = N-acetyl-L-aspartate + CoA + H(+). Its activity is regulated as follows. Aminooxyacetic acid (AOAA) blocks its activity in both cytoplasm and mitochondria. Catalyzes the synthesis of N-acetylaspartate acid (NAA) from L-aspartate and acetyl-CoA. Promotes dopamine uptake by regulating TNF-alpha expression. Attenuates methamphetamine-induced inhibition of dopamine uptake. This chain is N-acetylaspartate synthetase, found in Homo sapiens (Human).